The chain runs to 118 residues: Holo-[acyl-carrier-protein] synthase (118 aa).

Mg(2+) contacts are provided by D9 and E52.

Belongs to the P-Pant transferase superfamily. AcpS family. Requires Mg(2+) as cofactor.

The protein resides in the cytoplasm. The catalysed reaction is apo-[ACP] + CoA = holo-[ACP] + adenosine 3',5'-bisphosphate + H(+). Functionally, transfers the 4'-phosphopantetheine moiety from coenzyme A to a Ser of acyl-carrier-protein. This is Holo-[acyl-carrier-protein] synthase from Frankia alni (strain DSM 45986 / CECT 9034 / ACN14a).